The sequence spans 314 residues: Pantothenate kinase (314 aa).

93–100 (GSVAVGKS) contacts ATP.

It belongs to the prokaryotic pantothenate kinase family.

It localises to the cytoplasm. It carries out the reaction (R)-pantothenate + ATP = (R)-4'-phosphopantothenate + ADP + H(+). Its pathway is cofactor biosynthesis; coenzyme A biosynthesis; CoA from (R)-pantothenate: step 1/5. The chain is Pantothenate kinase from Shewanella denitrificans (strain OS217 / ATCC BAA-1090 / DSM 15013).